The chain runs to 529 residues: Polygalacturonase (529 aa).

The first 21 residues, 1–21, serve as a signal peptide directing secretion; the sequence is MNHRYTLLALAAAALSAGAHA. The Proton donor role is filled by aspartate 305. Histidine 331 is a catalytic residue. The interval 516–529 is required for PGA export across the outer membrane and catalytic activity; sequence AFVPLKSVAPTSPI.

The protein belongs to the glycosyl hydrolase 28 family. As to quaternary structure, monomer.

The protein resides in the secreted. The catalysed reaction is (1,4-alpha-D-galacturonosyl)n+m + H2O = (1,4-alpha-D-galacturonosyl)n + (1,4-alpha-D-galacturonosyl)m.. Contributes to the wilt disease production on tomato. This Ralstonia solanacearum (Pseudomonas solanacearum) protein is Polygalacturonase (pglA).